A 271-amino-acid chain; its full sequence is MSFDINWSTLESDNRLNDLIRKHLNSYLQNTQLPSYVSNLRVLDFDLGKVGPAITLKEITDPLDEFYDSIREEADQETEENNDNKEDSEHICPDRTIANHEGPKDDFEAPVVMPSPNDIQFLLEVEYKGDLLVTIGADLVLNYPVEKFMTLPVKLSISDIGLHSLCIVACLSKQLFLSFLCDVSDPALDDNQTVLDPKGPILAATKPLERISIVRSMKIETEIGEQYQGQGSVLRSVGELEQFLFTIFKDFLRKELAWPSWINLDFNDGDE.

One can recognise an SMP-LTD domain in the interval 1–267 (MSFDINWSTL…WPSWINLDFN (267 aa)). A Glycyl lysine isopeptide (Lys-Gly) (interchain with G-Cter in ubiquitin) cross-link involves residue K49.

Belongs to the MDM12 family. As to quaternary structure, component of the ER-mitochondria encounter structure (ERMES) or MDM complex, composed of MMM1, MDM10, MDM12 and MDM34. An MMM1 homodimer associates with one molecule of MDM12 on each side in a pairwise head-to-tail manner, and the SMP-LTD domains of MMM1 and MDM12 generate a continuous hydrophobic tunnel for phospholipid trafficking. Interacts with PUF3.

It localises to the mitochondrion outer membrane. It is found in the endoplasmic reticulum membrane. Its function is as follows. Component of the ERMES/MDM complex, which serves as a molecular tether to connect the endoplasmic reticulum (ER) and mitochondria. Components of this complex are involved in the control of mitochondrial shape and protein biogenesis, and function in nonvesicular lipid trafficking between the ER and mitochondria. MDM12 is required for the interaction of the ER-resident membrane protein MMM1 and the outer mitochondrial membrane-resident beta-barrel protein MDM10. The MDM12-MMM1 subcomplex functions in the major beta-barrel assembly pathway that is responsible for biogenesis of all mitochondrial outer membrane beta-barrel proteins, and acts in a late step after the SAM complex. The MDM10-MDM12-MMM1 subcomplex further acts in the TOM40-specific pathway after the action of the MDM12-MMM1 complex. Essential for establishing and maintaining the structure of mitochondria and maintenance of mtDNA nucleoids. In Saccharomyces cerevisiae (strain AWRI1631) (Baker's yeast), this protein is Mitochondrial distribution and morphology protein 12.